Consider the following 411-residue polypeptide: Signal-transducing adaptor protein 2 (411 aa).

The PH domain occupies 20–120 (HYYESFLEKK…GFILTVVELR (101 aa)). At Y22 the chain carries Phosphotyrosine. Positions 152–248 (WCFLQVSRLE…RALVPFLLDE (97 aa)) constitute an SH2 domain. Y250 carries the phosphotyrosine; by PTK6 modification. Residues 291-320 (VPVSVSSQEDKLPQLPPLPQLPDTDENYVT) form a disordered region. 2 positions are modified to phosphotyrosine: Y318 and Y330. Residues 338–364 (SSQAVPLKPKKPARLPAKPPKPSVVPK) are disordered. The stretch at 390 to 410 (TRLGDITAELEEKLQKRRALE) forms a coiled coil.

Interacts with PTK6 and CSF1R. Post-translationally, phosphorylated on tyrosine. Phosphorylated by PTK6 at Tyr-250 modulates PTK6-mediated STAT3 activation. Widely expressed.

The protein localises to the cytoplasm. It localises to the membrane. Substrate of protein kinase PTK6. May play a regulatory role in the acute-phase response in systemic inflammation and may modulate STAT3 activity. The protein is Signal-transducing adaptor protein 2 (Stap2) of Mus musculus (Mouse).